We begin with the raw amino-acid sequence, 217 residues long: Uracil phosphoribosyltransferase (217 aa).

5-phospho-alpha-D-ribose 1-diphosphate is bound by residues Arg-84, Arg-109, and 137-145 (DPMLATGGS). Residues Ile-202 and 207-209 (GDA) each bind uracil. Asp-208 lines the 5-phospho-alpha-D-ribose 1-diphosphate pocket.

The protein belongs to the UPRTase family. It depends on Mg(2+) as a cofactor.

The catalysed reaction is UMP + diphosphate = 5-phospho-alpha-D-ribose 1-diphosphate + uracil. Its pathway is pyrimidine metabolism; UMP biosynthesis via salvage pathway; UMP from uracil: step 1/1. With respect to regulation, allosterically activated by GTP. Its function is as follows. Catalyzes the conversion of uracil and 5-phospho-alpha-D-ribose 1-diphosphate (PRPP) to UMP and diphosphate. The chain is Uracil phosphoribosyltransferase from Synechococcus elongatus (strain ATCC 33912 / PCC 7942 / FACHB-805) (Anacystis nidulans R2).